The sequence spans 358 residues: MDRDSYHHYFYDYDGGEDFYRSTTPSEDIWKKFELVPPPWDLGPAAGNPALSFGLLEPWPVGCAGDETESQDYWKAWDANYASLIRRDCMWSGFSTQEPLERAVSDLLAVGAPSGYSPKEFATPDYTPELEAGNLAPIFPCLLGEPKIQACSRSESPSDSEGEEIDVTVKKRQSLSTRKPVIIAVRADLLDPRMNLFHISIHQQQHNYAAPFPPESCFQEGAPKRMPPKEALEREAPGGKDDKEDEEIVSLPPVESEAAQSCQPKPIHYDTENWTKKKYHSYLERKRRNDQRSRFLALRDEVPALASCSRVSKVMILVKATEYLHELAEAEERMATEKRQLECQRRQLQKRIEYLSSY.

2 disordered regions span residues 150–171 and 219–245; these read ACSR…TVKK and QEGA…DKED. The span at 227-242 shows a compositional bias: basic and acidic residues; that stretch reads PPKEALEREAPGGKDD. Residues 274–326 form the bHLH domain; that stretch reads WTKKKYHSYLERKRRNDQRSRFLALRDEVPALASCSRVSKVMILVKATEYLHE.

In terms of assembly, efficient DNA binding requires dimerization with another bHLH protein. Binds DNA as a heterodimer with MAX. As to expression, detected in adult testis.

It localises to the nucleus. In Homo sapiens (Human), this protein is Putative myc-like protein MYCLP1 (MYCLP1).